The sequence spans 556 residues: Dihydroxy-acid dehydratase (556 aa).

C47 provides a ligand contact to [2Fe-2S] cluster. Position 79 (D79) interacts with Mg(2+). Residue C120 participates in [2Fe-2S] cluster binding. D121 and K122 together coordinate Mg(2+). N6-carboxylysine is present on K122. [2Fe-2S] cluster is bound at residue C192. E444 lines the Mg(2+) pocket. S470 (proton acceptor) is an active-site residue.

This sequence belongs to the IlvD/Edd family. Homodimer. [2Fe-2S] cluster is required as a cofactor. The cofactor is Mg(2+).

It carries out the reaction (2R)-2,3-dihydroxy-3-methylbutanoate = 3-methyl-2-oxobutanoate + H2O. The enzyme catalyses (2R,3R)-2,3-dihydroxy-3-methylpentanoate = (S)-3-methyl-2-oxopentanoate + H2O. It participates in amino-acid biosynthesis; L-isoleucine biosynthesis; L-isoleucine from 2-oxobutanoate: step 3/4. It functions in the pathway amino-acid biosynthesis; L-valine biosynthesis; L-valine from pyruvate: step 3/4. Functionally, functions in the biosynthesis of branched-chain amino acids. Catalyzes the dehydration of (2R,3R)-2,3-dihydroxy-3-methylpentanoate (2,3-dihydroxy-3-methylvalerate) into 2-oxo-3-methylpentanoate (2-oxo-3-methylvalerate) and of (2R)-2,3-dihydroxy-3-methylbutanoate (2,3-dihydroxyisovalerate) into 2-oxo-3-methylbutanoate (2-oxoisovalerate), the penultimate precursor to L-isoleucine and L-valine, respectively. The sequence is that of Dihydroxy-acid dehydratase from Prochlorococcus marinus (strain MIT 9211).